Consider the following 181-residue polypeptide: Ribonuclease HII (181 aa).

Residues 1–181 (MICGIDEVGR…SLHRKNFKLI (181 aa)) form the RNase H type-2 domain. Aspartate 6, glutamate 7, and aspartate 98 together coordinate a divalent metal cation.

This sequence belongs to the RNase HII family. It depends on Mn(2+) as a cofactor. Mg(2+) is required as a cofactor.

The protein localises to the cytoplasm. The enzyme catalyses Endonucleolytic cleavage to 5'-phosphomonoester.. In terms of biological role, endonuclease that specifically degrades the RNA of RNA-DNA hybrids. This chain is Ribonuclease HII, found in Borreliella burgdorferi (strain ZS7) (Borrelia burgdorferi).